A 554-amino-acid polypeptide reads, in one-letter code: 2-succinyl-5-enolpyruvyl-6-hydroxy-3-cyclohexene-1-carboxylate synthase (554 aa).

It belongs to the TPP enzyme family. MenD subfamily. Homodimer. The cofactor is Mg(2+). Requires Mn(2+) as cofactor. It depends on thiamine diphosphate as a cofactor.

It catalyses the reaction isochorismate + 2-oxoglutarate + H(+) = 5-enolpyruvoyl-6-hydroxy-2-succinyl-cyclohex-3-ene-1-carboxylate + CO2. It functions in the pathway quinol/quinone metabolism; 1,4-dihydroxy-2-naphthoate biosynthesis; 1,4-dihydroxy-2-naphthoate from chorismate: step 2/7. The protein operates within quinol/quinone metabolism; menaquinone biosynthesis. In terms of biological role, catalyzes the thiamine diphosphate-dependent decarboxylation of 2-oxoglutarate and the subsequent addition of the resulting succinic semialdehyde-thiamine pyrophosphate anion to isochorismate to yield 2-succinyl-5-enolpyruvyl-6-hydroxy-3-cyclohexene-1-carboxylate (SEPHCHC). In Lactococcus lactis subsp. cremoris (strain SK11), this protein is 2-succinyl-5-enolpyruvyl-6-hydroxy-3-cyclohexene-1-carboxylate synthase.